A 952-amino-acid chain; its full sequence is Aminopeptidase 2, mitochondrial (952 aa).

Residues 1–52 (MPIVRWLLLKSAVRGSSLIGKAHPCLRSIAAHPRYLSNVYSPPAGVSRSLRI) constitute a mitochondrion transit peptide. Residues glutamate 228 and 360-364 (GAMEN) each bind substrate. N-linked (GlcNAc...) asparagine glycosylation is present at asparagine 381. Histidine 396 contributes to the Zn(2+) binding site. Catalysis depends on glutamate 397, which acts as the Proton acceptor. Zn(2+)-binding residues include histidine 400 and glutamate 419. Asparagine 713 carries an N-linked (GlcNAc...) asparagine glycan.

This sequence belongs to the peptidase M1 family. Zn(2+) serves as cofactor.

The protein resides in the periplasm. It localises to the cytoplasm. It is found in the mitochondrion. In terms of biological role, involved in the cellular supply of leucine from externally offered leucine-containing dipeptide substrates. This chain is Aminopeptidase 2, mitochondrial (APE2), found in Saccharomyces cerevisiae (strain ATCC 204508 / S288c) (Baker's yeast).